Consider the following 285-residue polypeptide: Protein unc-1 (285 aa).

The next 2 membrane-spanning stretches (helical) occupy residues 27–47 (IGTI…IVTF) and 69–89 (IGRL…IPCI).

The protein belongs to the band 7/mec-2 family.

The protein localises to the cell membrane. The protein resides in the cell junction. It localises to the gap junction. The polypeptide is Protein unc-1 (unc-1) (Caenorhabditis elegans).